Reading from the N-terminus, the 377-residue chain is Succinyl-diaminopimelate desuccinylase (377 aa).

His-67 provides a ligand contact to Zn(2+). Residue Asp-69 is part of the active site. Residue Asp-100 participates in Zn(2+) binding. The active-site Proton acceptor is Glu-134. Zn(2+) contacts are provided by Glu-135, Glu-163, and His-349.

It belongs to the peptidase M20A family. DapE subfamily. In terms of assembly, homodimer. It depends on Zn(2+) as a cofactor. Co(2+) is required as a cofactor.

The enzyme catalyses N-succinyl-(2S,6S)-2,6-diaminopimelate + H2O = (2S,6S)-2,6-diaminopimelate + succinate. The protein operates within amino-acid biosynthesis; L-lysine biosynthesis via DAP pathway; LL-2,6-diaminopimelate from (S)-tetrahydrodipicolinate (succinylase route): step 3/3. Its function is as follows. Catalyzes the hydrolysis of N-succinyl-L,L-diaminopimelic acid (SDAP), forming succinate and LL-2,6-diaminopimelate (DAP), an intermediate involved in the bacterial biosynthesis of lysine and meso-diaminopimelic acid, an essential component of bacterial cell walls. This Haemophilus influenzae (strain PittGG) protein is Succinyl-diaminopimelate desuccinylase.